Consider the following 879-residue polypeptide: MKMLTRLQVLTLALFSKGFLLSLGDHNFLRREIKIEGDLVLGGLFPINEKGTGTEECGRINEDRGIQRLEAMLFAIDEINKDDYLLPGVELGVHILDTCSRDTYALEQSLEFVRASLTKVDEAEYMCPDGSYAIQENIPLLIAGVIGGSYSSVSIQVANLLRLFQIPQISYASTSAKLSDKSRYDYFARTVPPDFYQAKAMAEILRFFNWTYVSTVASEGDYGETGIEAFEQEARLRNICIATAEKVGRSNIRKSYDSVIRELLQKPNARVVVLFMRSDDSRELIAAASRANASFTWVASDGWGAQESIIKGSEHVAYGAITLELASQPVRQFDRYFQSLNPYNNHRNPWFRDFWEQKFQCSLQNKRNHRRVCDKHLAIDSSNYEQESKIMFVVNAVYAMAHALHKMQRTLCPNTTKLCDAMRILDGKKLYRDYLLKINFTAPFNPNKDADSIVKFDTFGDGMGRYNVFNFQNVGGKYSYLKVGHWAETLSLDVDSIHWSRNSVPTSQCSDPCAPNEMKNMQPGDVCCWICIPCEPYEYLADEFTCMDCGPGQWPTADLTGCYDLPEDYIRWEDAWVIGPVTIACLGFMCTCMVVTVFIKHNNTPLVKASGRELCYILLFGVGLSYCMTFFFIAKPSPVICALRRLGLGSSFAICYSALLTKTNCIARIFDGVKNGAQRPKFISPSSQVFICLGLILVQIVMVSVWLILEAPGTRRYTLAEKRETVILKCNVKDSSMLISLTYDVILVILCTVYAFKTRKCPENFNEAKFIGFTMYTTCIIWLAFLPIFYVTSSDYRVQTTTMCISVSLSGFVVLGCLFAPKVHIILFQPQKNVVTHRLHLNRFSVSGTGTTYSQSSASTYVPTVCNGREVLDSTTSSL.

An N-terminal signal peptide occupies residues 1–22; sequence MKMLTRLQVLTLALFSKGFLLS. Topologically, residues 23 to 576 are extracellular; the sequence is LGDHNFLRRE…EDYIRWEDAW (554 aa). A disulfide bridge connects residues C57 and C99. L-glutamate is bound by residues S151 and 172 to 174; that span reads AST. An N-linked (GlcNAc...) asparagine glycan is attached at N209. Y222 lines the L-glutamate pocket. 7 cysteine pairs are disulfide-bonded: C240/C527, C361/C373, C412/C419, C509/C528, C513/C531, C534/C546, and C549/C562. An N-linked (GlcNAc...) asparagine glycan is attached at N292. D301 contacts L-glutamate. L-glutamate is bound at residue K389. Residues N414 and N439 are each glycosylated (N-linked (GlcNAc...) asparagine). A helical transmembrane segment spans residues 577-599; the sequence is VIGPVTIACLGFMCTCMVVTVFI. The Cytoplasmic segment spans residues 600-613; sequence KHNNTPLVKASGRE. Residues 614 to 634 form a helical membrane-spanning segment; it reads LCYILLFGVGLSYCMTFFFIA. The Extracellular portion of the chain corresponds to 635 to 645; the sequence is KPSPVICALRR. A helical transmembrane segment spans residues 646–664; the sequence is LGLGSSFAICYSALLTKTN. The Cytoplasmic portion of the chain corresponds to 665–688; the sequence is CIARIFDGVKNGAQRPKFISPSSQ. A helical membrane pass occupies residues 689-709; that stretch reads VFICLGLILVQIVMVSVWLIL. At 710–734 the chain is on the extracellular side; it reads EAPGTRRYTLAEKRETVILKCNVKD. The chain crosses the membrane as a helical span at residues 735-756; it reads SSMLISLTYDVILVILCTVYAF. Residues 757–769 are Cytoplasmic-facing; that stretch reads KTRKCPENFNEAK. Residues 770–792 traverse the membrane as a helical segment; it reads FIGFTMYTTCIIWLAFLPIFYVT. Residues 793 to 802 are Extracellular-facing; that stretch reads SSDYRVQTTT. Residues 803–828 form a helical membrane-spanning segment; that stretch reads MCISVSLSGFVVLGCLFAPKVHIILF. Residues 829–879 lie on the Cytoplasmic side of the membrane; it reads QPQKNVVTHRLHLNRFSVSGTGTTYSQSSASTYVPTVCNGREVLDSTTSSL.

This sequence belongs to the G-protein coupled receptor 3 family. Interacts with TAMALIN.

It is found in the cell membrane. G-protein coupled receptor for glutamate. Ligand binding causes a conformation change that triggers signaling via guanine nucleotide-binding proteins (G proteins) and modulates the activity of down-stream effectors. Signaling inhibits adenylate cyclase activity. The chain is Metabotropic glutamate receptor 3 (GRM3) from Pongo abelii (Sumatran orangutan).